A 314-amino-acid polypeptide reads, in one-letter code: 3'-5' exoribonuclease YhaM (314 aa).

An HD domain is found at 163–279 (HVVSMLNLAK…LHYIDNLDAK (117 aa)).

The protein belongs to the YhaM family.

In terms of biological role, shows a 3'-5' exoribonuclease activity. The protein is 3'-5' exoribonuclease YhaM of Bacillus velezensis (strain DSM 23117 / BGSC 10A6 / LMG 26770 / FZB42) (Bacillus amyloliquefaciens subsp. plantarum).